The following is a 234-amino-acid chain: MAKLTKRMRVIRDKVDSTKQYDISEAVALLKELATAKFVESVDVAVNLGIDARKSDQNVRGATVLPHGTGRSVRVAVFTQGANAEAAKAAGADLVGMDDLADQIKKGEFNFDVVIASPDAMRVVGQLGQILGPRGLMPNPKVGTVTPNVAEAVKNAKAGQVRYRNDKNGIIHTTIGKVDFESDKLKENLEALLVALKKAKPTQAKGVYIKKVSLSTTMGAGVAVDQSGLSTTTA.

It belongs to the universal ribosomal protein uL1 family. Part of the 50S ribosomal subunit.

Functionally, binds directly to 23S rRNA. The L1 stalk is quite mobile in the ribosome, and is involved in E site tRNA release. Protein L1 is also a translational repressor protein, it controls the translation of the L11 operon by binding to its mRNA. The polypeptide is Large ribosomal subunit protein uL1 (Sodalis glossinidius (strain morsitans)).